A 524-amino-acid polypeptide reads, in one-letter code: AAA ATPase forming ring-shaped complexes (524 aa).

Residues 1 to 29 (MGMGQEKHTDAASQSRDPEAVAAHENDQL) form a disordered region. Residues 22-59 (AAHENDQLRQRNHALAKALTRATEELRKAKAQLEQFMA) adopt a coiled-coil conformation. ATP is bound at residue 250–255 (GNGKTL).

The protein belongs to the AAA ATPase family. Homohexamer. Assembles into a hexameric ring structure.

The chain is AAA ATPase forming ring-shaped complexes from Bifidobacterium animalis subsp. lactis (strain BB-12).